Consider the following 143-residue polypeptide: Transcriptional regulator MraZ (143 aa).

SpoVT-AbrB domains follow at residues 5 to 47 and 76 to 119; these read EYQH…PKEE and AGEC…SRER.

It belongs to the MraZ family. In terms of assembly, forms oligomers.

The protein localises to the cytoplasm. Its subcellular location is the nucleoid. The protein is Transcriptional regulator MraZ of Heliobacterium modesticaldum (strain ATCC 51547 / Ice1).